Here is a 528-residue protein sequence, read N- to C-terminus: Ribonuclease Y (528 aa).

The chain crosses the membrane as a helical span at residues 15 to 35 (SLFFLALICGSIIGYFLYSFF). A KH domain is found at 217–277 (NISVVNIPNE…IRREIAKKTL (61 aa)). The HD domain occupies 343-436 (VLKHSLEVAF…VAIADTLSSA (94 aa)).

The protein belongs to the RNase Y family.

It is found in the cell membrane. Its function is as follows. Endoribonuclease that initiates mRNA decay. The sequence is that of Ribonuclease Y from Aster yellows witches'-broom phytoplasma (strain AYWB).